Here is an 82-residue protein sequence, read N- to C-terminus: LVMAGVESGRDGHIARNNNCVYVCFIEYTYIGTSRINCNDLCTKNGAKSGYCHQFSEYGNSCWCIDLPDNVPIKVPGDCHLQ.

An N-terminal signal peptide occupies residues 1-8; it reads LVMAGVES. The LCN-type CS-alpha/beta domain maps to 10 to 80; sequence RDGHIARNNN…VPIKVPGDCH (71 aa). Intrachain disulfides connect cysteine 20–cysteine 79, cysteine 24–cysteine 52, cysteine 38–cysteine 62, and cysteine 42–cysteine 64.

Expressed by the venom gland.

Its subcellular location is the secreted. Its function is as follows. Alpha toxins bind voltage-independently at site-3 of sodium channels (Nav) and inhibit the inactivation of the activated channels, thereby blocking neuronal transmission. The polypeptide is Sodium channel neurotoxin MeuNaTxalpha-3 (Mesobuthus eupeus (Lesser Asian scorpion)).